We begin with the raw amino-acid sequence, 324 residues long: ATP synthase subunit a 2 (324 aa).

The first 33 residues, 1 to 33 (MKRVNVFRSGVFSRLFALLLPFLLGINGLVYAS), serve as a signal peptide directing secretion. Helical transmembrane passes span 95–115 (HVVMMWIASAILLVVFLLVGN), 157–177 (LPYLLTVFAFILLLNLLGLVP), 179–199 (GATATGNINVTLTLAVFTFFI), 224–244 (ALWIIMIPIEIIGLFTKPFAL), 257–277 (IVILSLIFISFILKSYIVAMF), and 291–311 (IFVAFLQAFIFTMLSALFIGL).

The protein belongs to the ATPase A chain family. F-type ATPases have 2 components, CF(1) - the catalytic core - and CF(0) - the membrane proton channel. CF(1) has five subunits: alpha(3), beta(3), gamma(1), delta(1), epsilon(1). CF(0) has four main subunits: a, b, b' and c.

It localises to the cell inner membrane. Its function is as follows. Key component of the proton channel; it plays a direct role in the translocation of protons across the membrane. The polypeptide is ATP synthase subunit a 2 (Prosthecochloris aestuarii (strain DSM 271 / SK 413)).